Reading from the N-terminus, the 228-residue chain is Ribonuclease S-4 (228 aa).

Positions 1-27 (MGITGMTYMFTMVLSLIVLIFSASTVG) are cleaved as a signal peptide. Q36 serves as a coordination point for RNA. A disulfide bridge links C42 with C49. H60 lines the RNA pocket. The Proton donor role is filled by H60. C75 and C119 are oxidised to a cystine. N87 is a glycosylation site (N-linked (GlcNAc) asparagine). 98–99 (NV) provides a ligand contact to RNA. N-linked (GlcNAc...) asparagine glycosylation is present at N101. RNA contacts are provided by residues F108, 111 to 112 (RE), and 115 to 116 (KH). Residue E112 is part of the active site. H116 functions as the Proton acceptor in the catalytic mechanism. N-linked (GlcNAc...) asparagine glycosylation is found at N144, N160, and N175. 2 disulfides stabilise this stretch: C183–C222 and C199–C210.

Belongs to the RNase T2 family. In terms of processing, the N-glycans attached at Asn-101, Asn-160 and Asn-175 consist predominantly of disaccharide (GlcNAc-GlcNAc). The N-glycan at 87 is 53% monosaccharide and 47% disaccharide. The N-glycan at Asn-144 contains mannose and xylose.

It is found in the secreted. Its subcellular location is the extracellular space. It carries out the reaction a ribonucleotidyl-ribonucleotide-RNA + H2O = a 3'-end 3'-phospho-ribonucleotide-RNA + a 5'-end dephospho-ribonucleoside-RNA + H(+). Self-incompatibility (SI) is the inherited ability of a flowering plant to prevent self-fertilization by discriminating between self and non-self pollen during pollination. In many species, self-incompatibility is controlled by the single, multiallelic locus S. The sequence is that of Ribonuclease S-4 from Pyrus pyrifolia (Chinese pear).